The primary structure comprises 459 residues: tRNA modification GTPase MnmE (459 aa).

Positions 20, 85, and 124 each coordinate (6S)-5-formyl-5,6,7,8-tetrahydrofolate. Positions 221–380 (GLSTVIIGRP…LEEAIQSLFY (160 aa)) constitute a TrmE-type G domain. Asn231 contacts K(+). GTP is bound by residues 231–236 (NVGKSS), 250–256 (TDIPGTT), and 275–278 (DTAG). Ser235 is a binding site for Mg(2+). Positions 250, 252, and 255 each coordinate K(+). Thr256 provides a ligand contact to Mg(2+). Lys459 lines the (6S)-5-formyl-5,6,7,8-tetrahydrofolate pocket.

This sequence belongs to the TRAFAC class TrmE-Era-EngA-EngB-Septin-like GTPase superfamily. TrmE GTPase family. Homodimer. Heterotetramer of two MnmE and two MnmG subunits. K(+) serves as cofactor.

It localises to the cytoplasm. Functionally, exhibits a very high intrinsic GTPase hydrolysis rate. Involved in the addition of a carboxymethylaminomethyl (cmnm) group at the wobble position (U34) of certain tRNAs, forming tRNA-cmnm(5)s(2)U34. This Bacillus subtilis (strain 168) protein is tRNA modification GTPase MnmE.